A 59-amino-acid chain; its full sequence is UPF0434 protein HDEF_0234 (59 aa).

Belongs to the UPF0434 family.

In Hamiltonella defensa subsp. Acyrthosiphon pisum (strain 5AT), this protein is UPF0434 protein HDEF_0234.